The sequence spans 469 residues: Probable ribonuclease FAU-1 (469 aa).

It belongs to the FAU-1 family.

Probable RNase involved in rRNA stability through maturation and/or degradation of precursor rRNAs. Binds to RNA in loop regions with AU-rich sequences. The protein is Probable ribonuclease FAU-1 of Pyrococcus abyssi (strain GE5 / Orsay).